Reading from the N-terminus, the 176-residue chain is Adenine phosphoribosyltransferase (176 aa).

It belongs to the purine/pyrimidine phosphoribosyltransferase family. Homodimer.

It is found in the cytoplasm. The catalysed reaction is AMP + diphosphate = 5-phospho-alpha-D-ribose 1-diphosphate + adenine. It participates in purine metabolism; AMP biosynthesis via salvage pathway; AMP from adenine: step 1/1. In terms of biological role, catalyzes a salvage reaction resulting in the formation of AMP, that is energically less costly than de novo synthesis. The sequence is that of Adenine phosphoribosyltransferase from Borreliella burgdorferi (strain ZS7) (Borrelia burgdorferi).